A 434-amino-acid chain; its full sequence is Probable proline transporter 2 (434 aa).

Transmembrane regions (helical) follow at residues Pro26–Tyr46, Ser49–Ile69, Leu106–Ala126, Ile149–Leu169, Ile171–Ser191, Ile213–Pro233, Leu251–Trp271, Leu297–Phe317, Val339–Leu359, Phe362–Met382, and Val403–Val423.

It belongs to the amino acid/polyamine transporter 2 family. Amino acid/auxin permease (AAAP) (TC 2.A.18.3) subfamily.

The protein localises to the cell membrane. Proline transporter that mediates proline transport across the plasma membrane. This Oryza sativa subsp. japonica (Rice) protein is Probable proline transporter 2.